A 436-amino-acid chain; its full sequence is MGQVLPLVTRQGDRIAIVSGLRTPFARQATAFHGIPAVDLGKMVVGELLARSEIPAEVIEQLVFGQVVQMPEAPNIAREIVLGTGMNVHTDAYSVSRACATSFQAVANVAESLMAGTIRAGIAGGADSSSVLPIGVSKKLARVLVDVNKARTMSQRLKLFSRLRLRDLMPVPPAVAEYSTGLRMGDTAEQMAKTYGITREQQDALAHRSHQRAAQAWSDGKLKEEVMTAFIPPYKQPLAEDNNIRGNSSLADYAKLRPAFDRKHGTVTAANSTPLTDGAAAVILMTESRAKELGLVPLGYLRSYAFTAIDVWQDMLLGPAWSTPLALERAGLTMSDLTLIDMHEAFAAQTLANIQLLGSERFARDVLGRAHATGEVDDSKFNVLGGSIAYGHPFAATGARMITQTLHELRRRGGGFGLVTACAAGGLGAAIVVEAE.

The active-site Acyl-thioester intermediate is Cys99. Catalysis depends on proton acceptor residues His392 and Cys422.

It belongs to the thiolase-like superfamily. Thiolase family. In terms of assembly, heterotetramer of two alpha chains (FadJ) and two beta chains (FadI).

Its subcellular location is the cytoplasm. It carries out the reaction an acyl-CoA + acetyl-CoA = a 3-oxoacyl-CoA + CoA. It functions in the pathway lipid metabolism; fatty acid beta-oxidation. Its function is as follows. Catalyzes the final step of fatty acid oxidation in which acetyl-CoA is released and the CoA ester of a fatty acid two carbons shorter is formed. In Escherichia coli O6:H1 (strain CFT073 / ATCC 700928 / UPEC), this protein is 3-ketoacyl-CoA thiolase.